Consider the following 427-residue polypeptide: MNKPVTTIAPGCRDTPILKQRGQREVFCGLTGIIWLHRKMQDAFFLVVGSRTCAHLLQSAAGVMIFAEPRFGTAILEEKDLAGLADAQDEIDREVERLLSRRPDIKQLFLVGSCPSEVIKLDLGRAAERLTRKFAPHVRVLNYSGSGIETTFTQGEDACLESMVPVLPETEARELLLVGALPDVVEDQALGLLDKMGIGPVRVLPAPRADGTPGVGPNTVYAVLQPFLGETCSALDRRGARRIDAPFPFGEEGTTLWLRAIAREFGVSDETFEAVTAAPRARARKAIAAAAETLRDKSIFFFPDSQLEIPLARFLTRECGMAAIEVGAPYIHKGLVGPDLDLLAAGPTLSEGQDVDMQLDRCRAARPDLTVCGLGLANPLEAEGLTTKWAIELVFTPVHFYEQAGDLAGLFARPIRRREKLRLEVAE.

Positions 28, 53, and 114 each coordinate [4Fe-4S] cluster.

Belongs to the BchN/ChlN family. In terms of assembly, protochlorophyllide reductase is composed of three subunits; BchL, BchN and BchB. Forms a heterotetramer of two BchB and two BchN subunits. [4Fe-4S] cluster serves as cofactor.

The catalysed reaction is chlorophyllide a + oxidized 2[4Fe-4S]-[ferredoxin] + 2 ADP + 2 phosphate = protochlorophyllide a + reduced 2[4Fe-4S]-[ferredoxin] + 2 ATP + 2 H2O. It participates in porphyrin-containing compound metabolism; bacteriochlorophyll biosynthesis (light-independent). In terms of biological role, component of the dark-operative protochlorophyllide reductase (DPOR) that uses Mg-ATP and reduced ferredoxin to reduce ring D of protochlorophyllide (Pchlide) to form chlorophyllide a (Chlide). This reaction is light-independent. The NB-protein (BchN-BchB) is the catalytic component of the complex. The chain is Light-independent protochlorophyllide reductase subunit N from Dinoroseobacter shibae (strain DSM 16493 / NCIMB 14021 / DFL 12).